The chain runs to 310 residues: tRNA methyltransferase 10 homolog B (310 aa).

The stretch at 55-94 forms a coiled coil; that stretch reads RKQRNWERRLEVKKSKRKEEKLRKKLNRQDKDVSDAQLSK. The SAM-dependent MTase TRM10-type domain occupies 101-298; the sequence is TKERLEGARA…AGIPPGKGFV (198 aa).

It belongs to the class IV-like SAM-binding methyltransferase superfamily. TRM10 family.

It catalyses the reaction guanosine(9) in tRNA + S-adenosyl-L-methionine = N(1)-methylguanosine(9) in tRNA + S-adenosyl-L-homocysteine + H(+). Functionally, S-adenosyl-L-methionine-dependent guanine N(1)-methyltransferase that catalyzes the formation of N(1)-methylguanine at position 9 (m1G9) in tRNAs. Probably not able to catalyze formation of N(1)-methyladenine at position 9 (m1A9) in tRNAs. The polypeptide is tRNA methyltransferase 10 homolog B (trmt10b) (Danio rerio (Zebrafish)).